Reading from the N-terminus, the 127-residue chain is Methylglyoxal synthase (127 aa).

The MGS-like domain occupies 1-127 (MEGQRCIALI…ENLIDFNSAD (127 aa)). Substrate is bound by residues His-12, Lys-16, 38-41 (TGTT), and 59-60 (SG). Catalysis depends on Asp-65, which acts as the Proton donor/acceptor. His-92 serves as a coordination point for substrate.

Belongs to the methylglyoxal synthase family.

It catalyses the reaction dihydroxyacetone phosphate = methylglyoxal + phosphate. Its function is as follows. Catalyzes the formation of methylglyoxal from dihydroxyacetone phosphate. The chain is Methylglyoxal synthase from Agrobacterium fabrum (strain C58 / ATCC 33970) (Agrobacterium tumefaciens (strain C58)).